Here is an 823-residue protein sequence, read N- to C-terminus: Ciliated left-right organizer ZP-N domains-containing protein (823 aa).

The first 22 residues, 1-22 (MWGSPALAWAVWLACVQPTVFP), serve as a signal peptide directing secretion. 4 disordered regions span residues 206 to 242 (MGLY…LLPL), 269 to 422 (LVHI…DLLH), 434 to 520 (GPFL…SPSP), and 632 to 656 (LPRE…EGPG). The span at 216 to 230 (TVTVQSPRQGLLQRW) shows a compositional bias: pro residues. Positions 389 to 402 (GPETPPAGVPPAAS) are enriched in low complexity.

Its subcellular location is the secreted. Plays a role in left-right patterning process. The protein is Ciliated left-right organizer ZP-N domains-containing protein of Homo sapiens (Human).